The primary structure comprises 118 residues: Holo-[acyl-carrier-protein] synthase (118 aa).

Residues Asp8 and Glu58 each contribute to the Mg(2+) site.

The protein belongs to the P-Pant transferase superfamily. AcpS family. Requires Mg(2+) as cofactor.

It localises to the cytoplasm. It carries out the reaction apo-[ACP] + CoA = holo-[ACP] + adenosine 3',5'-bisphosphate + H(+). Transfers the 4'-phosphopantetheine moiety from coenzyme A to a Ser of acyl-carrier-protein. The chain is Holo-[acyl-carrier-protein] synthase from Listeria monocytogenes serotype 4a (strain HCC23).